We begin with the raw amino-acid sequence, 188 residues long: tRNA(Phe) 7-((3-amino-3-carboxypropyl)-4-demethylwyosine(37)-N(4))-methyltransferase (188 aa).

Belongs to the TYW3 family.

The enzyme catalyses 4-demethyl-7-[(3S)-3-amino-3-carboxypropyl]wyosine(37) in tRNA(Phe) + S-adenosyl-L-methionine = 7-[(3S)-3-amino-3-carboxypropyl]wyosine(37) in tRNA(Phe) + S-adenosyl-L-homocysteine + H(+). In terms of biological role, S-adenosyl-L-methionine-dependent methyltransferase that acts as a component of the wyosine derivatives biosynthesis pathway. Probably methylates N-4 position of wybutosine-86 to produce wybutosine-72. This Aeropyrum pernix (strain ATCC 700893 / DSM 11879 / JCM 9820 / NBRC 100138 / K1) protein is tRNA(Phe) 7-((3-amino-3-carboxypropyl)-4-demethylwyosine(37)-N(4))-methyltransferase.